The chain runs to 159 residues: Ribosomal RNA large subunit methyltransferase H (159 aa).

S-adenosyl-L-methionine is bound by residues Leu76, Gly108, and 127 to 132; that span reads FSKMTF.

It belongs to the RNA methyltransferase RlmH family. As to quaternary structure, homodimer.

Its subcellular location is the cytoplasm. It carries out the reaction pseudouridine(1915) in 23S rRNA + S-adenosyl-L-methionine = N(3)-methylpseudouridine(1915) in 23S rRNA + S-adenosyl-L-homocysteine + H(+). Its function is as follows. Specifically methylates the pseudouridine at position 1915 (m3Psi1915) in 23S rRNA. In Lachnospira eligens (strain ATCC 27750 / DSM 3376 / VPI C15-48 / C15-B4) (Eubacterium eligens), this protein is Ribosomal RNA large subunit methyltransferase H.